A 158-amino-acid chain; its full sequence is Fucolectin (158 aa).

The segment at 16–148 (KATQSAQLRG…TSESLHLCEV (133 aa)) is F5/8 type C-like. Ca(2+) contacts are provided by Asn35, Asp38, Asn40, and Ser49. Intrachain disulfides connect Cys50/Cys146, Cys82/Cys83, and Cys108/Cys124. Alpha-L-fucose is bound by residues His52 and Arg79. The Cell attachment site signature appears at 79–81 (RGD). Arg86 lines the alpha-L-fucose pocket. Ca(2+)-binding residues include Cys146 and Glu147.

This sequence belongs to the fucolectin family. In terms of assembly, homotrimer.

The protein resides in the secreted. Its function is as follows. Acts as a defensive agent. Recognizes blood group fucosylated oligosaccharides including A, B, H and Lewis B-type antigens. Does not recognize Lewis A antigen and has low affinity for monovalent haptens. In Anguilla anguilla (European freshwater eel), this protein is Fucolectin.